Here is a 200-residue protein sequence, read N- to C-terminus: FMN-dependent NADH:quinone oxidoreductase (200 aa).

Residues S10 and 95-98 each bind FMN; that span reads MYNF.

It belongs to the azoreductase type 1 family. Homodimer. FMN serves as cofactor.

The enzyme catalyses 2 a quinone + NADH + H(+) = 2 a 1,4-benzosemiquinone + NAD(+). It catalyses the reaction N,N-dimethyl-1,4-phenylenediamine + anthranilate + 2 NAD(+) = 2-(4-dimethylaminophenyl)diazenylbenzoate + 2 NADH + 2 H(+). Its function is as follows. Quinone reductase that provides resistance to thiol-specific stress caused by electrophilic quinones. Also exhibits azoreductase activity. Catalyzes the reductive cleavage of the azo bond in aromatic azo compounds to the corresponding amines. This is FMN-dependent NADH:quinone oxidoreductase from Alteromonas mediterranea (strain DSM 17117 / CIP 110805 / LMG 28347 / Deep ecotype).